A 440-amino-acid chain; its full sequence is Tetratricopeptide repeat protein 5 (440 aa).

5 TPR repeats span residues 7–61 (EEAK…EEVL), 68–98 (AQAL…AVKL), 103–130 (VEAW…SGAL), 136–174 (KVSL…AVQM), and 179–216 (GRSW…AEKV). A Nuclear export signal motif is present at residues 13–24 (LQKLQGLVDRLY). A Phosphoserine; by ATM modification is found at Ser203. Phosphoserine; by CHEK2 is present on Ser221. One copy of the TPR 6 repeat lies at 224 to 253 (PDLHLNRATLHKYEESYGEALEGFSQAAAL). Residues 285–287 (KPK) form a mediates interaction with 28S rRNA of ribosome-coding tubulin region.

As to quaternary structure, interacts with JMY and p300/EP300; the interaction occurs in the nucleus and augments the association between JMY and p300/EP300 in response to DNA damage. Interacts with PRMT5; the interaction is DNA damage-dependent and promotes PRMT5 interaction with p53/TP53 and subsequent methylation. Forms a complex with HSF1 and p300/EP300; these interactions augment chromatin-bound HSF1 and p300/EP300 histone acetyltransferase activity, resulting in enhanced heat-shock-responsive transcription. Interacts with JMY; the interaction occurs in the cytoplasm and results in the inhibition of JYM's nucleation activity. Interacts with ribosome-coding tubulin (via 60S subunit 28S rRNA and protein uL24/RPL26) and the N-terminal of nascent tubulin polypeptide (via alpha-tubulin MREC motif and beta-tubulin MREI motif); these interactions result in tubulin mRNA-targeted degradation. Interacts with ATP5F1B; the interaction occurs in the mitochondria and results in ATP production decrease. Interacts with p53/TP53; the interaction occurs in the mitochondria and results in increased apoptosis. Phosphorylation by ATM kinase induces nuclear accumulation while interfering with nuclear export, and phosphorylation by CHEK2 kinase enhances nuclear stability. Expressed in heart, brain, spleen, lung, liver, skeletal muscle, kidney and testis.

The protein localises to the nucleus. The protein resides in the cytoplasm. It is found in the cytoplasmic vesicle. Its subcellular location is the mitochondrion matrix. Its function is as follows. Cofactor involved in the regulation of various cellular mechanisms such as actin regulation, autophagy, chromatin regulation and DNA repair. In physiological conditions, interacts with cofactor JMY in the cytoplasm which prevents JMY's actin nucleation activity and ability to activate the Arp2/3 complex. Acts as a negative regulator of nutrient stress-induced autophagy by inhibiting JMY's interaction with MAP1LC3B, thereby preventing autophagosome formation. Involves in tubulin autoregulation by promoting its degradation in response to excess soluble tubulin. To do so, associates with the active ribosome near the ribosome exit tunnel and with nascent tubulin polypeptides early during their translation, triggering tubulin mRNA-targeted degradation. Following DNA damage, phosphorylated by DNA damage responsive protein kinases ATM and CHEK2, leading to its nuclear accumulation and stability. Nuclear TTC5/STRAP promotes the assembly of a stress-responsive p53/TP53 coactivator complex, which includes the coactivators JMY and p300, thereby increasing p53/TP53-dependent transcription and apoptosis. Also recruits arginine methyltransferase PRMT5 to p53/TP53 when DNA is damaged, allowing PRMT5 to methylate p53/TP53. In DNA stress conditions, also prevents p53/TP53 degradation by E3 ubiquitin ligase MDM2. Upon heat-shock stress, forms a chromatin-associated complex with heat-shock factor 1 HSF1 and p300/EP300 to stimulate heat-shock-responsive transcription, thereby increasing cell survival. Mitochondrial TTC5/STRAP interacts with ATP synthase subunit beta ATP5F1B which decreased ATP synthase activity and lowers mitochondrial ATP production, thereby regulating cellular respiration and mitochondrial-dependent apoptosis. Mitochondrial TTC5/STRAP also regulates p53/TP53-mediated apoptosis. This is Tetratricopeptide repeat protein 5 from Mus musculus (Mouse).